A 493-amino-acid chain; its full sequence is MKILFVSSEVFPLMKTGGLADVSGSLPAALSALGHDVRILMPAYPEAISAAETPNALSLRQAGSQLTLLSTRLPGTTVPLWLLDAPASFGRFGNPYLAPNGAPWPDNAERFALLARVAVDLTQDRLGLGWKPDVVHCNDWQTGLIPPLLSDEPNRPAVVFTVHNLAYQGLFPYETFQRLALPPRLWKMEALEFYGQLSFIKGGLVFADRINTVSPSYAEEIQTPEFGCGLDGLLRSRKSCLSGILNGIDDVAWNPATDPYLPAPYGPDTLERKKVNRTVLRQRYGLPDDPEVAVLGMVGRMVEQKGVDLLIDILDDLLQLPVQLVVLGSGDKEFERCFERAAAARPERIAVTIGYDEPLAHLIEAGADIFLMPSRFEPCGLNQLYSQRYGTVPIVRKVGGLADTVEDATPERLAAGQASGIVFEPAKPAFLLEAVYRALALYREPEVWRAVCKCGMAKDFSWRKSASRYVGLYREALAGMNAGCSIADPRCAA.

Lysine 15 is an ADP-alpha-D-glucose binding site.

It belongs to the glycosyltransferase 1 family. Bacterial/plant glycogen synthase subfamily.

The catalysed reaction is [(1-&gt;4)-alpha-D-glucosyl](n) + ADP-alpha-D-glucose = [(1-&gt;4)-alpha-D-glucosyl](n+1) + ADP + H(+). It functions in the pathway glycan biosynthesis; glycogen biosynthesis. Synthesizes alpha-1,4-glucan chains using ADP-glucose. The polypeptide is Glycogen synthase 1 (Methylococcus capsulatus (strain ATCC 33009 / NCIMB 11132 / Bath)).